The following is a 129-amino-acid chain: Small ribosomal subunit protein uS9 (129 aa).

This sequence belongs to the universal ribosomal protein uS9 family.

This Chlorobium phaeobacteroides (strain DSM 266 / SMG 266 / 2430) protein is Small ribosomal subunit protein uS9.